A 318-amino-acid chain; its full sequence is Thymidylate synthase (318 aa).

DUMP-binding positions include Arg-25 and 180–181 (RR). The Nucleophile role is filled by Cys-200. DUMP-binding positions include 220 to 223 (RSAD), Asn-231, and 261 to 263 (HIY). (6R)-5,10-methylene-5,6,7,8-tetrahydrofolate is bound at residue Asp-223. Position 317 (Ala-317) interacts with (6R)-5,10-methylene-5,6,7,8-tetrahydrofolate.

It belongs to the thymidylate synthase family. Bacterial-type ThyA subfamily. Homodimer.

Its subcellular location is the cytoplasm. It carries out the reaction dUMP + (6R)-5,10-methylene-5,6,7,8-tetrahydrofolate = 7,8-dihydrofolate + dTMP. It participates in pyrimidine metabolism; dTTP biosynthesis. Its function is as follows. Catalyzes the reductive methylation of 2'-deoxyuridine-5'-monophosphate (dUMP) to 2'-deoxythymidine-5'-monophosphate (dTMP) while utilizing 5,10-methylenetetrahydrofolate (mTHF) as the methyl donor and reductant in the reaction, yielding dihydrofolate (DHF) as a by-product. This enzymatic reaction provides an intracellular de novo source of dTMP, an essential precursor for DNA biosynthesis. The sequence is that of Thymidylate synthase from Ligilactobacillus salivarius (strain UCC118) (Lactobacillus salivarius).